The following is a 312-amino-acid chain: Bifunctional pinoresinol-lariciresinol reductase (312 aa).

Residues 10 to 16 (GGTGYLG), R35, and K44 each bind NADP(+). The active-site Proton acceptor is the K139. R143 lines the NADP(+) pocket. H271 lines the substrate pocket.

Belongs to the NmrA-type oxidoreductase family. Isoflavone reductase subfamily. Dimer. Expressed in young stems, young roots and petioles. In stems, expressed in radial parenchyma cells and in the cambial cells of developing secondary xylem.

The catalysed reaction is (+)-lariciresinol + NADP(+) = (+)-pinoresinol + NADPH + H(+). It carries out the reaction (-)-secoisolariciresinol + NADP(+) = (+)-lariciresinol + NADPH + H(+). Its function is as follows. Reductase involved in lignan biosynthesis. Catalyzes the enantioselective sequential conversion of (+)-pinoresinol into (+)-lariciresinol and of (+)-lariciresinol into (-)-secoisolariciresinol. Abstracts the 4R-hydride from the NADPH cofactor during catalysis. The chain is Bifunctional pinoresinol-lariciresinol reductase (PLR_Fi1) from Forsythia intermedia (Border forsythia).